Here is a 454-residue protein sequence, read N- to C-terminus: Tetrahydroanabasine acetyltransferase (454 aa).

Catalysis depends on proton acceptor residues His-164 and Asp-389.

The protein belongs to the plant acyltransferase family. Monomer.

The enzyme catalyses tetrahydroanabasine + acetyl-CoA = ammodendrine + CoA. The protein operates within alkaloid biosynthesis. Tetrahydroanabasine acetyltransferase involved in the accumulation of quinolizidine type antinutritional alkaloids (QAs) natural products. QAs impart a bitter taste to plants, acting as repellents and toxicants for herbivores and predators, and possess a variety of pharmacological effects, including sedative, anticonvulsant, anti-inflammatory, antiviral, antitumor, antipyretic, anti-hepatitis B, antifibrotic, antiallergic, antidiarrheal, analgesic and antimicrobial activities. Mediates the conversion of tetrahydroanabasine into ammodendrine. The chain is Tetrahydroanabasine acetyltransferase from Lupinus albus (White lupine).